The sequence spans 98 residues: Co-chaperonin GroES (98 aa).

The disordered stretch occupies residues 35–57; the sequence is EKPQEGKVISAGPGRVDDKGTRV.

This sequence belongs to the GroES chaperonin family. In terms of assembly, heptamer of 7 subunits arranged in a ring. Interacts with the chaperonin GroEL.

The protein resides in the cytoplasm. Together with the chaperonin GroEL, plays an essential role in assisting protein folding. The GroEL-GroES system forms a nano-cage that allows encapsulation of the non-native substrate proteins and provides a physical environment optimized to promote and accelerate protein folding. GroES binds to the apical surface of the GroEL ring, thereby capping the opening of the GroEL channel. In Cutibacterium acnes (strain DSM 16379 / KPA171202) (Propionibacterium acnes), this protein is Co-chaperonin GroES.